Here is a 463-residue protein sequence, read N- to C-terminus: Ribosomal protein uS12 methylthiotransferase RimO (463 aa).

The interval 1 to 26 is disordered; the sequence is MPAMSQNPPLLRPDLAPAPIFDTSRR. Residues 8 to 19 show a composition bias toward low complexity; that stretch reads PPLLRPDLAPAP. In terms of domain architecture, MTTase N-terminal spans 30–140; it reads PTIGMVSLGC…VLDAVHHAVP (111 aa). Positions 39, 75, 104, 171, 175, and 178 each coordinate [4Fe-4S] cluster. Positions 157-395 constitute a Radical SAM core domain; that stretch reads LTPRHYSYLK…MQKAQAISEA (239 aa). Positions 398–463 constitute a TRAM domain; it reads AAKVGHRIEV…AGEYDLWGRL (66 aa).

It belongs to the methylthiotransferase family. RimO subfamily. [4Fe-4S] cluster serves as cofactor.

The protein localises to the cytoplasm. The enzyme catalyses L-aspartate(89)-[ribosomal protein uS12]-hydrogen + (sulfur carrier)-SH + AH2 + 2 S-adenosyl-L-methionine = 3-methylsulfanyl-L-aspartate(89)-[ribosomal protein uS12]-hydrogen + (sulfur carrier)-H + 5'-deoxyadenosine + L-methionine + A + S-adenosyl-L-homocysteine + 2 H(+). Functionally, catalyzes the methylthiolation of an aspartic acid residue of ribosomal protein uS12. The sequence is that of Ribosomal protein uS12 methylthiotransferase RimO from Paracoccus denitrificans (strain Pd 1222).